A 364-amino-acid polypeptide reads, in one-letter code: Small ribosomal subunit biogenesis GTPase RsgA (364 aa).

One can recognise a CP-type G domain in the interval 101–264; it reads KGLVEKPGVP…VIDTPGLREL (164 aa). GTP is bound by residues 154–157 and 206–214; these read NKSD and GSSGAGKST. Positions 288, 293, 295, and 301 each coordinate Zn(2+). Positions 339 to 364 are disordered; that stretch reads QVAQKRKRKTIPRQGKRWRREHGDGQ. Positions 342-358 are enriched in basic residues; the sequence is QKRKRKTIPRQGKRWRR.

This sequence belongs to the TRAFAC class YlqF/YawG GTPase family. RsgA subfamily. In terms of assembly, monomer. Associates with 30S ribosomal subunit, binds 16S rRNA. Zn(2+) serves as cofactor.

Its subcellular location is the cytoplasm. Its function is as follows. One of several proteins that assist in the late maturation steps of the functional core of the 30S ribosomal subunit. Helps release RbfA from mature subunits. May play a role in the assembly of ribosomal proteins into the subunit. Circularly permuted GTPase that catalyzes slow GTP hydrolysis, GTPase activity is stimulated by the 30S ribosomal subunit. The protein is Small ribosomal subunit biogenesis GTPase RsgA of Syntrophotalea carbinolica (strain DSM 2380 / NBRC 103641 / GraBd1) (Pelobacter carbinolicus).